Consider the following 504-residue polypeptide: L-carnitine/gamma-butyrobetaine antiporter (504 aa).

12 consecutive transmembrane segments (helical) span residues 10 to 30 (IEPK…WLTV), 51 to 71 (WGWA…WLVF), 92 to 112 (IFMM…SIEI), 143 to 163 (GPLP…FFFV), 195 to 215 (FYLV…TPLV), 231 to 251 (LDAI…ACGL), 263 to 283 (SYLS…SFIM), 316 to 336 (WTVF…IFLA), 347 to 367 (LCFG…TVLG), 398 to 418 (WAAL…CFIA), 446 to 466 (LLVR…LLAL), and 475 to 495 (AIIA…LSFI).

This sequence belongs to the BCCT transporter (TC 2.A.15) family. CaiT subfamily. Homotrimer.

It localises to the cell inner membrane. The catalysed reaction is 4-(trimethylamino)butanoate(in) + (R)-carnitine(out) = 4-(trimethylamino)butanoate(out) + (R)-carnitine(in). Its pathway is amine and polyamine metabolism; carnitine metabolism. Its function is as follows. Catalyzes the exchange of L-carnitine for gamma-butyrobetaine. The polypeptide is L-carnitine/gamma-butyrobetaine antiporter (Escherichia coli O81 (strain ED1a)).